Reading from the N-terminus, the 285-residue chain is 2-dehydro-3-deoxyphosphooctonate aldolase (285 aa).

This sequence belongs to the KdsA family.

It is found in the cytoplasm. The enzyme catalyses D-arabinose 5-phosphate + phosphoenolpyruvate + H2O = 3-deoxy-alpha-D-manno-2-octulosonate-8-phosphate + phosphate. It participates in carbohydrate biosynthesis; 3-deoxy-D-manno-octulosonate biosynthesis; 3-deoxy-D-manno-octulosonate from D-ribulose 5-phosphate: step 2/3. It functions in the pathway bacterial outer membrane biogenesis; lipopolysaccharide biosynthesis. The polypeptide is 2-dehydro-3-deoxyphosphooctonate aldolase (Variovorax paradoxus (strain S110)).